The chain runs to 200 residues: Ribonuclease HII (200 aa).

One can recognise an RNase H type-2 domain in the interval 14–200 (SRLAGVDEVG…FAPVKQWQLL (187 aa)). The a divalent metal cation site is built by Asp20, Glu21, and Asp112.

This sequence belongs to the RNase HII family. Mn(2+) is required as a cofactor. Requires Mg(2+) as cofactor.

It is found in the cytoplasm. The enzyme catalyses Endonucleolytic cleavage to 5'-phosphomonoester.. Its function is as follows. Endonuclease that specifically degrades the RNA of RNA-DNA hybrids. The protein is Ribonuclease HII of Chromohalobacter salexigens (strain ATCC BAA-138 / DSM 3043 / CIP 106854 / NCIMB 13768 / 1H11).